The primary structure comprises 315 residues: Ankyrin repeat domain-containing protein 54 (315 aa).

The interval 1–49 (MDGSSPLLAAAGSDGDRSSSEGEYTLAGGPSAGDTEKREGESPMEAAGA) is disordered. 4 ANK repeats span residues 124–153 (HAVK…DPCA), 157–186 (KGRT…DPNQ), 190–219 (LGNT…RVDA), and 223–255 (AGRT…EVTQ).

The protein localises to the nucleus. It is found in the cytoplasm. It localises to the midbody. In terms of biological role, plays an important role in regulating intracellular signaling events associated with erythroid terminal differentiation. This is Ankyrin repeat domain-containing protein 54 (ankrd54) from Danio rerio (Zebrafish).